The chain runs to 49 residues: Large ribosomal subunit protein uL16 (49 aa).

The protein belongs to the universal ribosomal protein uL16 family. As to quaternary structure, part of the 50S ribosomal subunit.

Binds 23S rRNA and is also seen to make contacts with the A and possibly P site tRNAs. This is Large ribosomal subunit protein uL16 (rplP) from Aquifex pyrophilus.